A 353-amino-acid chain; its full sequence is Protein pelota homolog (353 aa).

This sequence belongs to the eukaryotic release factor 1 family. Pelota subfamily. As to quaternary structure, monomer. Requires a divalent metal cation as cofactor.

The protein localises to the cytoplasm. May function in recognizing stalled ribosomes, interact with stem-loop structures in stalled mRNA molecules, and effect endonucleolytic cleavage of the mRNA. May play a role in the release non-functional ribosomes and degradation of damaged mRNAs. Has endoribonuclease activity. The chain is Protein pelota homolog from Methanopyrus kandleri (strain AV19 / DSM 6324 / JCM 9639 / NBRC 100938).